Consider the following 197-residue polypeptide: Tic20 family protein Ycf60 (197 aa).

Transmembrane regions (helical) follow at residues 3-23 (IIIA…GVGV), 47-66 (FGYY…PDVL), 81-101 (LVVV…MSYF), 118-138 (VSQA…LNAL), and 141-161 (MILM…LTMG).

The protein belongs to the Tic20 family.

It localises to the plastid. Its subcellular location is the chloroplast membrane. The protein is Tic20 family protein Ycf60 (ycf60) of Cyanidioschyzon merolae (strain NIES-3377 / 10D) (Unicellular red alga).